The following is a 265-amino-acid chain: UPF0354 protein GTNG_2723 (265 aa).

Belongs to the UPF0354 family.

The polypeptide is UPF0354 protein GTNG_2723 (Geobacillus thermodenitrificans (strain NG80-2)).